Reading from the N-terminus, the 463-residue chain is Interferon-inducible GTPase 5 (463 aa).

The region spanning 52–234 (TRLEVGVTGE…PMLVTTWEHD (183 aa)) is the IRG-type G domain. Residues 61–68 (ESGAGKSS), 86–90 (TGVVE), 168–170 (KVD), and 215–217 (SNL) contribute to the GTP site. S246 and S303 each carry phosphoserine. A disordered region spans residues 409-438 (QGEVSLEAAGDNAVEKRSSGEGTSEEAPLS).

Belongs to the TRAFAC class dynamin-like GTPase superfamily. IRG family.

Its subcellular location is the cell projection. The protein resides in the cilium. It localises to the flagellum. It is found in the lipid droplet. The catalysed reaction is GTP + H2O = GDP + phosphate + H(+). In terms of biological role, required for sperm motility and therefore male fertility, via positive regulation of spermatozoa fibrous sheath formation. This is Interferon-inducible GTPase 5 (Irgc) from Rattus norvegicus (Rat).